A 260-amino-acid polypeptide reads, in one-letter code: Flap endonuclease Xni (260 aa).

Asp105 serves as a coordination point for Mg(2+). Residues 164–259 (NQFLDLMALA…VNGPANTQQA (96 aa)) form the 5'-3' exonuclease domain. Leu172, Ala173, Pro181, Ile183, and Ile186 together coordinate K(+). Residues 185-190 (GIGPKS) form an interaction with DNA region.

It belongs to the Xni family. Mg(2+) is required as a cofactor. K(+) serves as cofactor.

Has flap endonuclease activity. During DNA replication, flap endonucleases cleave the 5'-overhanging flap structure that is generated by displacement synthesis when DNA polymerase encounters the 5'-end of a downstream Okazaki fragment. In Shewanella sp. (strain MR-4), this protein is Flap endonuclease Xni.